Here is a 205-residue protein sequence, read N- to C-terminus: Small ribosomal subunit protein bS16 (205 aa).

Positions 110 to 205 (GEEVKIAVGT…ADDNEEPEDE (96 aa)) are disordered. The span at 123-132 (DPLERERERA) shows a compositional bias: basic and acidic residues. The span at 153–205 (EETEAEEAEDVETADAEDADAASETDEPEAAADEADETDASADADDNEEPEDE) shows a compositional bias: acidic residues.

This sequence belongs to the bacterial ribosomal protein bS16 family.

The chain is Small ribosomal subunit protein bS16 from Salinibacter ruber (strain DSM 13855 / M31).